The chain runs to 152 residues: Transcriptional regulator MraZ (152 aa).

SpoVT-AbrB domains are found at residues 5–52 and 81–124; these read VTSI…PLHE and ATEC…QDKQ.

It belongs to the MraZ family. As to quaternary structure, forms oligomers.

Its subcellular location is the cytoplasm. It localises to the nucleoid. This is Transcriptional regulator MraZ from Actinobacillus pleuropneumoniae serotype 5b (strain L20).